The primary structure comprises 248 residues: Homeobox protein BarH-like 1 (248 aa).

Positions 135–194 (GRRSRTVFTELQLMGLEKRFEKQKYLSTPDRIDLAESLGLSQLQVKTWYQNRRMKWKKIV) form a DNA-binding region, homeobox. Positions 197–248 (GGGLESPTKPKGRPKKNSIPTSEQLSEQERTREADRLSDGGASSLSDANQEE) are disordered. Residues 223 to 234 (EQERTREADRLS) show a composition bias toward basic and acidic residues. The segment covering 237–248 (GASSLSDANQEE) has biased composition (polar residues).

The protein belongs to the BAR homeobox family.

The protein localises to the nucleus. Transcription factor, is involved in craniofacial development, and in stomach organogenesis. This Danio rerio (Zebrafish) protein is Homeobox protein BarH-like 1 (barx1).